We begin with the raw amino-acid sequence, 394 residues long: Elongation factor Tu 2 (394 aa).

Positions 10 to 204 (KPHVNVGTIG…FLDSYIPEPE (195 aa)) constitute a tr-type G domain. Positions 19–26 (GHVDHGKT) are G1. 19 to 26 (GHVDHGKT) contributes to the GTP binding site. Thr-26 contributes to the Mg(2+) binding site. Residues 60–64 (GITIN) form a G2 region. The tract at residues 81–84 (DCPG) is G3. GTP-binding positions include 81–85 (DCPGH) and 136–139 (NKCD). The interval 136–139 (NKCD) is G4. The G5 stretch occupies residues 174-176 (SAL).

The protein belongs to the TRAFAC class translation factor GTPase superfamily. Classic translation factor GTPase family. EF-Tu/EF-1A subfamily. As to quaternary structure, monomer.

Its subcellular location is the cytoplasm. It catalyses the reaction GTP + H2O = GDP + phosphate + H(+). Its function is as follows. GTP hydrolase that promotes the GTP-dependent binding of aminoacyl-tRNA to the A-site of ribosomes during protein biosynthesis. The sequence is that of Elongation factor Tu 2 from Shigella flexneri serotype 5b (strain 8401).